Reading from the N-terminus, the 312-residue chain is MTGNNQTLILEFLLLGLPIPSEYHLLFYALFLAMYLTIILGNLLIIVLVRLDSHLHMPMYLFLSNLSFSDLCFSSVTMPKLLQNMQSQVPSISYTGCLTQLYFFMVFGDMESFLLVVMAYDRYVAICFPLRYTTIMSTKFCASLVLLLWMLTMTHALLHTLLIARLSFCEKNVILHFFCDISALLKLSCSDIYVNELMIYILGGLIIIIPFLLIVMSYVRIFFSILKFPSIQDIYKVFSTCGSHLSVVTLFYGTIFGIYLCPSGNNSTVKEIAMAMMYTVVTPMLNPFIYSLRNRDMKRALIRVICTKKISL.

The Extracellular segment spans residues 1-25; it reads MTGNNQTLILEFLLLGLPIPSEYHL. Residue asparagine 5 is glycosylated (N-linked (GlcNAc...) asparagine). A helical transmembrane segment spans residues 26–49; that stretch reads LFYALFLAMYLTIILGNLLIIVLV. The Cytoplasmic portion of the chain corresponds to 50-57; it reads RLDSHLHM. Residues 58–79 traverse the membrane as a helical segment; it reads PMYLFLSNLSFSDLCFSSVTMP. The Extracellular portion of the chain corresponds to 80-100; it reads KLLQNMQSQVPSISYTGCLTQ. Cysteine 97 and cysteine 189 form a disulfide bridge. The helical transmembrane segment at 101-120 threads the bilayer; the sequence is LYFFMVFGDMESFLLVVMAY. Residues 121–139 lie on the Cytoplasmic side of the membrane; that stretch reads DRYVAICFPLRYTTIMSTK. A helical membrane pass occupies residues 140 to 158; sequence FCASLVLLLWMLTMTHALL. Residues 159-196 are Extracellular-facing; the sequence is HTLLIARLSFCEKNVILHFFCDISALLKLSCSDIYVNE. The chain crosses the membrane as a helical span at residues 197–219; the sequence is LMIYILGGLIIIIPFLLIVMSYV. Topologically, residues 220–236 are cytoplasmic; it reads RIFFSILKFPSIQDIYK. Residues 237–260 form a helical membrane-spanning segment; the sequence is VFSTCGSHLSVVTLFYGTIFGIYL. Residues 261 to 272 are Extracellular-facing; it reads CPSGNNSTVKEI. A helical transmembrane segment spans residues 273–292; it reads AMAMMYTVVTPMLNPFIYSL. At 293 to 312 the chain is on the cytoplasmic side; that stretch reads RNRDMKRALIRVICTKKISL.

It belongs to the G-protein coupled receptor 1 family. As to expression, olfactory epithelium.

Its subcellular location is the cell membrane. Odorant receptor. The sequence is that of Olfactory receptor 1500 (Olr1500) from Rattus norvegicus (Rat).